Here is a 588-residue protein sequence, read N- to C-terminus: Pre-mRNA 3'-end-processing factor FIP1 (588 aa).

A compositionally biased stretch (basic and acidic residues) spans 1–10; sequence MSAGEVERLV. Disordered regions lie at residues 1–81, 223–291, and 334–588; these read MSAG…EDDV, QGRT…ESPD, and VDNN…TPAE. The tract at residues 1–96 is sufficient for interaction with PAPOLA; that stretch reads MSAGEVERLV…DIKTGAPQYG (96 aa). Residues 1–341 are necessary for stimulating PAPOLA activity; that stretch reads MSAGEVERLV…TAVDNNFSKP (341 aa). 2 stretches are compositionally biased toward acidic residues: residues 19-40 and 66-80; these read GDEEEEWLYGDENEVERPEEEN and TEDDSDSDSDDDEDD. A phosphoserine mark is found at Ser-70, Ser-72, and Ser-74. The sufficient for interaction with CPSF4 stretch occupies residues 122–228; the sequence is KGVDLDAPGS…FKVQQGRTGN (107 aa). Low complexity predominate over residues 259–270; it reads STSSQSQTSTAS. A compositionally biased stretch (basic and acidic residues) spans 280–291; sequence WQDRYGRAESPD. Ser-289 is subject to Phosphoserine. The span at 340-398 shows a compositional bias: pro residues; it reads KPPPFFPPGAPPTHLPPPPFLPPPPTVSTAPPLIPPPGIPITVPPPGFPPPPGAPPPSL. Position 420 is a phosphotyrosine (Tyr-420). The sufficient for interaction with CPSF1 and CSTF3 stretch occupies residues 437 to 588; sequence SLVDTSKQWD…QESTEATPAE (152 aa). The segment covering 448-486 has biased composition (basic and acidic residues); that stretch reads YARREKDRDRERDRDRERDRDRDRERERTRERERERDHS. The interval 451–484 is arg/Asp/Glu-rich domain; that stretch reads REKDRDRERDRDRERDRDRDRERERTRERERERD. Residue Ser-486 is modified to Phosphoserine. Thr-488 is subject to Phosphothreonine. Phosphoserine is present on residues Ser-490 and Ser-494. The segment covering 495-522 has biased composition (basic and acidic residues); sequence DEERYRYREYAERGYERHRASREKEERH. The segment covering 536-545 has biased composition (basic residues); sequence KSSRSNSRRR. The residue at position 548 (Ser-548) is a Phosphoserine. The span at 554–564 shows a compositional bias: basic residues; it reads HRRHKHKKSKR.

Belongs to the FIP1 family. Component of the cleavage and polyadenylation specificity factor (CPSF) complex, composed of CPSF1, CPSF2, CPSF3, CPSF4 and FIP1L1. Found in a complex with CPSF1, FIP1L1 and PAPOLA. Interacts with CPSF1, CPSF4, CSTF2 and CSTF3. Interacts with AHCYL1 (when phosphorylated); the interaction is direct and associates AHCYL1 with the CPSF complex and RNA. Interacts with PAPOLA; the interaction seems to be increased by the interaction with AHCYL1. Interacts with NUDT21/CPSF5; this interaction occurs in a RNA sequence-specific manner. Interacts (preferentially via unphosphorylated form and Arg/Glu/Asp-rich domain) with CPSF6 (via Arg/Ser-rich domain); this interaction mediates, at least in part, the interaction between the CFIm and CPSF complexes and may be inhibited by CPSF6 hyper-phosphorylation. Interacts (preferentially via unphosphorylated form and Arg/Asp/Glu-rich domain) with CPSF7 (via Arg/Ser-rich domain); this interaction mediates, at least in part, the interaction between the CFIm and CPSF complexes and may be inhibited by CPSF7 hyper-phosphorylation.

It localises to the nucleus. Functionally, component of the cleavage and polyadenylation specificity factor (CPSF) complex that plays a key role in pre-mRNA 3'-end formation, recognizing the AAUAAA signal sequence and interacting with poly(A) polymerase and other factors to bring about cleavage and poly(A) addition. FIP1L1 contributes to poly(A) site recognition and stimulates poly(A) addition. Binds to U-rich RNA sequence elements surrounding the poly(A) site. May act to tether poly(A) polymerase to the CPSF complex. The polypeptide is Pre-mRNA 3'-end-processing factor FIP1 (FIP1L1) (Pongo abelii (Sumatran orangutan)).